We begin with the raw amino-acid sequence, 207 residues long: dITP/XTP pyrophosphatase (207 aa).

Position 11–16 (11–16) interacts with substrate; sequence TGNPGK. Residue Asp72 is the Proton acceptor of the active site. Residue Asp72 participates in Mg(2+) binding. Substrate contacts are provided by residues Ser73, 154–157, Lys177, and 182–183; these read FGYD and HR.

The protein belongs to the HAM1 NTPase family. In terms of assembly, homodimer. Mg(2+) is required as a cofactor.

It catalyses the reaction XTP + H2O = XMP + diphosphate + H(+). It carries out the reaction dITP + H2O = dIMP + diphosphate + H(+). The enzyme catalyses ITP + H2O = IMP + diphosphate + H(+). Its function is as follows. Pyrophosphatase that catalyzes the hydrolysis of nucleoside triphosphates to their monophosphate derivatives, with a high preference for the non-canonical purine nucleotides XTP (xanthosine triphosphate), dITP (deoxyinosine triphosphate) and ITP. Seems to function as a house-cleaning enzyme that removes non-canonical purine nucleotides from the nucleotide pool, thus preventing their incorporation into DNA/RNA and avoiding chromosomal lesions. The sequence is that of dITP/XTP pyrophosphatase from Thermus thermophilus (strain ATCC 27634 / DSM 579 / HB8).